Reading from the N-terminus, the 133-residue chain is MGPHRLLYQALCKAGDKFVYPVLPAFAKPAWNHAAGPKTVFFWAPTIKWTLIGAGLADLARPADKLSLYQNSALFATGAIWTRYCLVITPINYYLSSVNFFVMCTGLAQLCRIAHYRYQNPDWETKEIMETHN.

3 helical membrane-spanning segments follow: residues 40 to 57, 73 to 91, and 100 to 116; these read VFFWAPTIKWTLIGAGLA, ALFATGAIWTRYCLVITPI, and FFVMCTGLAQLCRIAHY.

This sequence belongs to the mitochondrial pyruvate carrier (MPC) (TC 2.A.105) family.

It is found in the mitochondrion inner membrane. May mediate the uptake of pyruvate into mitochondria. This chain is Probable mitochondrial pyruvate carrier 2, found in Caenorhabditis elegans.